We begin with the raw amino-acid sequence, 382 residues long: MTAPALSPTLELACELINRPSVTPLDEGCQQLMSQRLAACGFAIEPMHIEDVENFWAIRGNEGPVLCFAGHTDVVPTGPLQAWQNPPFSARIDEQGMLHGRGAADMKGSLAAMVVAVERFTADHPDHKGQIAFLITSDEEGPAHHGTKAVVERLRERGQRLDWCIVGEPSSTSLVGDVVKNGRRGSLGGTLTVRGQQGHVAYPHLAKNPIHLAAPALAELAAEHWDDGNAFFPPTSFQISNLNAGTGATNVIPGTLEAVFNFRFSTESTVEGLQQRTAAILDKHGLDWSIDWALSGLPFLTEPGDLLDGVAKAIRSVTGRETTPSTSGGTSDGRFIATLGTQVVELGPVNATIHQVDEHILASDLDVLTDIYYQTLVNLLAC.

His71 is a Zn(2+) binding site. Residue Asp73 is part of the active site. Asp105 contributes to the Zn(2+) binding site. The active-site Proton acceptor is the Glu139. Residues Glu140, Glu168, and His354 each coordinate Zn(2+).

It belongs to the peptidase M20A family. DapE subfamily. Homodimer. Zn(2+) serves as cofactor. Co(2+) is required as a cofactor.

The enzyme catalyses N-succinyl-(2S,6S)-2,6-diaminopimelate + H2O = (2S,6S)-2,6-diaminopimelate + succinate. The protein operates within amino-acid biosynthesis; L-lysine biosynthesis via DAP pathway; LL-2,6-diaminopimelate from (S)-tetrahydrodipicolinate (succinylase route): step 3/3. In terms of biological role, catalyzes the hydrolysis of N-succinyl-L,L-diaminopimelic acid (SDAP), forming succinate and LL-2,6-diaminopimelate (DAP), an intermediate involved in the bacterial biosynthesis of lysine and meso-diaminopimelic acid, an essential component of bacterial cell walls. The protein is Succinyl-diaminopimelate desuccinylase of Stutzerimonas stutzeri (strain A1501) (Pseudomonas stutzeri).